The following is a 303-amino-acid chain: Zinc transporter ZIP9 (303 aa).

Residues 7-27 (ISLLSLAMLVGCYVSGIIPLA) form a helical membrane-spanning segment. Residue N29 is glycosylated (N-linked (GlcNAc...) asparagine). Helical transmembrane passes span 35 to 55 (LKLV…AVIV), 102 to 122 (AYIG…DQIG), 142 to 162 (ITTT…LGAA), 172 to 192 (LIVF…LVSF), and 206 to 226 (HLLV…LGLS). N-linked (GlcNAc...) asparagine glycosylation is present at N237. A run of 2 helical transmembrane segments spans residues 240–260 (GVAM…HVLP) and 282–302 (LEVC…IGHQ).

The protein belongs to the ZIP transporter (TC 2.A.5) family.

It localises to the golgi apparatus. The protein resides in the trans-Golgi network membrane. It is found in the cell membrane. Its subcellular location is the cytoplasm. The protein localises to the perinuclear region. It localises to the mitochondrion. The protein resides in the nucleus. The catalysed reaction is Zn(2+)(in) = Zn(2+)(out). In terms of biological role, transports zinc ions across cell and organelle membranes into the cytoplasm and regulates intracellular zinc homeostasis. Participates in the zinc ions efflux out of the secretory compartments. Also functions as a membrane androgen receptor that mediates, through a G protein, the non-classical androgen signaling pathway, characterized by the activation of MAPK3/MAPK1 (Erk1/2) and transcription factors CREB1 or ATF1. Moreover, has dual functions as a membrane-bound androgen receptor and as an androgen-dependent zinc transporter both of which are mediated through an inhibitory G protein (Gi) that mediates both MAP kinase and zinc signaling leading to the androgen-dependent apoptotic process. This chain is Zinc transporter ZIP9, found in Xenopus tropicalis (Western clawed frog).